Reading from the N-terminus, the 981-residue chain is Lateral signaling target protein 2 homolog (981 aa).

Residues 308–462 (PLGSSSIEAP…LESSDDDTDE (155 aa)) are disordered. Low complexity-rich tracts occupy residues 326 to 356 (TTSSSQNNNNSSNNNHSSSSTTTTTMGTTNT), 369 to 380 (NNHNSNSNSSTN), 390 to 404 (SPSMLSLSATSTPTA), and 412 to 433 (PSHSIDSTSSAATSSTNPPADW). Acidic residues predominate over residues 434–462 (SDGDDEDEDDDDIEVDEEDLESSDDDTDE). Ser544 and Ser545 each carry phosphoserine. 2 disordered regions span residues 561-642 (EQMQ…SSLS) and 749-897 (DNVF…SPPA). The span at 576–611 (HSHRHHQRHHHHHHHRHSHQHRQPHPHRTTRSGRKR) shows a compositional bias: basic residues. A compositionally biased stretch (low complexity) spans 630 to 642 (LASGDTSAASSLS). The span at 760–791 (ATGQRHSAGASMQRNNTIDLASQSGEGSPSGA) shows a compositional bias: polar residues. Ser805 carries the post-translational modification Phosphoserine. 2 stretches are compositionally biased toward low complexity: residues 811–866 (AASS…PVSA) and 883–896 (PSSATSTSATLSPP). The segment at 901-961 (DGKAPRCMAC…VCRDCYVREV (61 aa)) adopts an FYVE-type zinc-finger fold. Residues Cys907, Cys910, Cys923, Cys926, Cys931, Cys934, Cys953, and Cys956 each coordinate Zn(2+).

Belongs to the lst-2 family.

In terms of biological role, negative regulator of epidermal growth factor receptor (EGFR) signaling. The chain is Lateral signaling target protein 2 homolog from Drosophila erecta (Fruit fly).